A 198-amino-acid chain; its full sequence is Endonuclease V (198 aa).

Mg(2+) contacts are provided by D38 and D101.

Belongs to the endonuclease V family. It depends on Mg(2+) as a cofactor.

Its subcellular location is the cytoplasm. The enzyme catalyses Endonucleolytic cleavage at apurinic or apyrimidinic sites to products with a 5'-phosphate.. In terms of biological role, DNA repair enzyme involved in the repair of deaminated bases. Selectively cleaves double-stranded DNA at the second phosphodiester bond 3' to a deoxyinosine leaving behind the intact lesion on the nicked DNA. The sequence is that of Endonuclease V from Saccharolobus islandicus (strain M.16.27) (Sulfolobus islandicus).